Consider the following 2568-residue polypeptide: Highly reducing polyketide synthase resH (2568 aa).

Residues 9–437 enclose the Ketosynthase family 3 (KS3) domain; that stretch reads PEPIAIVGMA…GANAHAILDA (429 aa). Catalysis depends on for beta-ketoacyl synthase activity residues cysteine 184, histidine 319, and histidine 359. One can recognise a Malonyl-CoA:ACP transacylase (MAT) domain in the interval 549 to 877; that stretch reads FIFTGQGAQW…KLAGSLFLSG (329 aa). The N-terminal hotdog fold stretch occupies residues 942 to 1081; sequence HDLLGSRLPG…TNDQLLWPDD (140 aa). The PKS/mFAS DH domain maps to 942–1244; sequence HDLLGSRLPG…FSSLETASSD (303 aa). Histidine 974 functions as the Proton acceptor; for dehydratase activity in the catalytic mechanism. The segment at 1091 to 1244 is C-terminal hotdog fold; it reads NKDSYDRRWY…FSSLETASSD (154 aa). Aspartate 1156 serves as the catalytic Proton donor; for dehydratase activity. The methyltransferase (CMet) domain stretch occupies residues 1295-1595; sequence VTRLAIRSSA…SGADVVLDDY (301 aa). One can recognise an Enoyl reductase (ER) domain in the interval 1853–2154; sequence GRLDSFYFKE…QEDSVGLAVL (302 aa). Residues 2177-2357 enclose the Ketoreductase (KR) domain; sequence ASYLLIGCLG…QATSIALGMI (181 aa). The region spanning 2485-2563 is the Carrier domain; sequence AVKSAILGLI…GLADQVVSLA (79 aa). The residue at position 2522 (serine 2522) is an O-(pantetheine 4'-phosphoryl)serine.

Requires pantetheine 4'-phosphate as cofactor.

It functions in the pathway antifungal biosynthesis. Highly reducing polyketide synthase; part of the gene cluster that mediates the biosynthesis of the tetrahydropyranyl antifungal agent restricticin that acts as an inhibitor of CYP51 and blocks the ergosterol biosynthesis. The highly reducing polyketide synthase resH, the short chain dehydrogenase resG, the cyclase resF, the FAD-dependent monooxygenase resA and the enoylreductase resD are required to generate the first stable intermediate desmethylrestrictinol. ResH with resD biosynthesize the first polyketide chain intermediate that is reduced by resG, followed by epoxidation by resA before 6-endo cyclization via epoxide opening by resF leads to desmethylrestrictinol. The methyltransferase resE then catalyzes the C4 O-methylation of desmethylrestrictinol to produce restrictinol, and the nonribosomal peptide synthetase resC catalyzes the C3 esterification of restrictinol with glycine that leads to restricticin. The polypeptide is Highly reducing polyketide synthase resH (Aspergillus sclerotiorum).